A 1026-amino-acid polypeptide reads, in one-letter code: Multidrug resistance protein MdtC (1026 aa).

A run of 11 helical transmembrane segments spans residues 15–35 (ILIAAAITLCGILGFRLLPVA), 333–353 (EVEETLAISVALVILVVFLFL), 360–380 (LIPAVAVPVSLIGTFAAMYLC), 387–407 (LSLMALTIATGFVVDDAIVVL), 431–451 (VGFTVISMSLSLVAVFLPLLL), 463–483 (FAVTLSVAIGISLVVSLTLTP), 528–548 (LVGVVFLGTVALNIWLYIAIP), 853–873 (LILIVAAIATVYIVLGILYES), 897–917 (LFNAPFSLIALIGIMLLIGIV), 953–973 (PIMMTTLAALFGALPLVLSGG), and 984–1004 (ITIVGGLVMSQLLTLYTTPVV).

The protein belongs to the resistance-nodulation-cell division (RND) (TC 2.A.6) family. MdtC subfamily. Part of a tripartite efflux system composed of MdtA, MdtB and MdtC. MdtC forms a heteromultimer with MdtB.

The protein localises to the cell inner membrane. The polypeptide is Multidrug resistance protein MdtC (Salmonella dublin (strain CT_02021853)).